The sequence spans 31 residues: Cyclotide psybry B (31 aa).

A cross-link (cyclopeptide (Gly-Asn)) is located at residues 1-31 (GFNPCGETCWNKPTCHAPGCTCSIANICVRN). Intrachain disulfides connect Cys5/Cys20, Cys9/Cys22, and Cys15/Cys28.

In terms of processing, this is a cyclic peptide.

In terms of biological role, probably participates in a plant defense mechanism. This is Cyclotide psybry B from Psychotria brachyceras.